Consider the following 363-residue polypeptide: UDP-3-O-acylglucosamine N-acyltransferase (363 aa).

The active-site Proton acceptor is His-266.

The protein belongs to the transferase hexapeptide repeat family. LpxD subfamily. Homotrimer.

It carries out the reaction a UDP-3-O-[(3R)-3-hydroxyacyl]-alpha-D-glucosamine + a (3R)-hydroxyacyl-[ACP] = a UDP-2-N,3-O-bis[(3R)-3-hydroxyacyl]-alpha-D-glucosamine + holo-[ACP] + H(+). It participates in bacterial outer membrane biogenesis; LPS lipid A biosynthesis. Its function is as follows. Catalyzes the N-acylation of UDP-3-O-acylglucosamine using 3-hydroxyacyl-ACP as the acyl donor. Is involved in the biosynthesis of lipid A, a phosphorylated glycolipid that anchors the lipopolysaccharide to the outer membrane of the cell. This chain is UDP-3-O-acylglucosamine N-acyltransferase, found in Bordetella pertussis (strain Tohama I / ATCC BAA-589 / NCTC 13251).